A 38-amino-acid chain; its full sequence is Odorant-binding protein 2 (38 aa).

This sequence belongs to the calycin superfamily. Lipocalin family. As to expression, nasal mucosa.

It is found in the secreted. The protein localises to the extracellular space. Functionally, this soluble protein may play a specific role in odor discrimination and perception. In Hystrix cristata (North African crested porcupine), this protein is Odorant-binding protein 2.